Here is a 59-residue protein sequence, read N- to C-terminus: Ribosome biogenesis protein Nop10 (59 aa).

Belongs to the NOP10 family.

In terms of biological role, involved in ribosome biogenesis; more specifically in 18S rRNA pseudouridylation and in cleavage of pre-rRNA. This chain is Ribosome biogenesis protein Nop10, found in Thermococcus gammatolerans (strain DSM 15229 / JCM 11827 / EJ3).